The primary structure comprises 603 residues: Glutamyl-tRNA(Gln) amidotransferase subunit B, mitochondrial (603 aa).

A mitochondrion-targeting transit peptide spans 1–32 (MIRHRLRLALSAAPVTATGRRTRSKTAPRRSL). A disordered region spans residues 12 to 59 (AAPVTATGRRTRSKTAPRRSLSTQQTQSSASSSSNNLDGDGRAFVPLR). Low complexity predominate over residues 31 to 48 (SLSTQQTQSSASSSSNNL).

It belongs to the GatB/GatE family. GatB subfamily. As to quaternary structure, subunit of the heterotrimeric GatCAB amidotransferase (AdT) complex, composed of A, B and C subunits.

It localises to the mitochondrion. The enzyme catalyses L-glutamyl-tRNA(Gln) + L-glutamine + ATP + H2O = L-glutaminyl-tRNA(Gln) + L-glutamate + ADP + phosphate + H(+). In terms of biological role, allows the formation of correctly charged Gln-tRNA(Gln) through the transamidation of misacylated Glu-tRNA(Gln) in the mitochondria. The reaction takes place in the presence of glutamine and ATP through an activated gamma-phospho-Glu-tRNA(Gln). The protein is Glutamyl-tRNA(Gln) amidotransferase subunit B, mitochondrial of Arthroderma otae (strain ATCC MYA-4605 / CBS 113480) (Microsporum canis).